The chain runs to 184 residues: Photosystem I assembly protein Ycf4 (184 aa).

Transmembrane regions (helical) follow at residues 19 to 39 and 57 to 77; these read ISNLCWAFILFLGSLGFFLVG and IIFFPQGIVMSFYGIAGLFIS.

It belongs to the Ycf4 family.

The protein localises to the plastid thylakoid membrane. In terms of biological role, seems to be required for the assembly of the photosystem I complex. The protein is Photosystem I assembly protein Ycf4 of Cuscuta exaltata (Tall dodder).